Here is a 439-residue protein sequence, read N- to C-terminus: MGVANDSSPEYQWMSPHRLSDTVILGDCLYFNNIMSQLDLHQNWAPSVRLLNYFKNFNKETLLKIEENDYINSSFFQQKDKRFYPINDDFYHISTGGYGIVFKIDNYVVKFVFEATKLYSPMETTAEFTVPKFLYNNLKGDEKKLIVCAWAMGLNYKLTFLHTLYKRVLHMLLLLIQTMDGQELSLRYSSKVFLKAFNERKDSIKFVKLLSHFYPAVINSNINVINYFNRMFHFFEHEKRTNYEYERGNIIIFPLALYSADKVDTELAIKLGFKSLVQYIKFIFLQMALLYIKIYELPCCDNFLHADLKPDNILLFDSNEPIIIHLKDKKFVFNERIKSALNDFDFSQVAGIINKKIKNNFKVEHNWYYDFHFFVHTLLKTYPEIEKDIEFSTALEEFIMCTKTDCDKYRLKVSILHPISFLEKFIMRDIFSDWINGGN.

A Protein kinase domain is found at 87-439 (NDDFYHISTG…IFSDWINGGN (353 aa)). Residues 93-101 (ISTGGYGIV) and lysine 117 contribute to the ATP site. Aspartate 307 functions as the Proton acceptor in the catalytic mechanism.

It belongs to the protein kinase superfamily. Ser/Thr protein kinase family. Post-translationally, phosphorylated in vivo. Autophosphorylated in vitro.

The protein localises to the host endoplasmic reticulum. Its subcellular location is the host endoplasmic reticulum-Golgi intermediate compartment. The catalysed reaction is L-seryl-[protein] + ATP = O-phospho-L-seryl-[protein] + ADP + H(+). It carries out the reaction L-threonyl-[protein] + ATP = O-phospho-L-threonyl-[protein] + ADP + H(+). In terms of biological role, essential serine-protein kinase involved in the early stage of virion morphogenesis. The sequence is that of Serine/threonine-protein kinase 2 (OPG054) from Bos taurus (Bovine).